Reading from the N-terminus, the 436-residue chain is uncharacterized protein (436 aa).

This is an uncharacterized protein from Arabidopsis thaliana (Mouse-ear cress).